Here is a 407-residue protein sequence, read N- to C-terminus: MANAIHVTSEIGKLKTVMLHRPGKEIENITPDSMERLLFDDIPYLPIAQKEHDFFAKTLTDQGIEVIYFEKLAADALSDDGVRKEFLNRMIAESGYAVGVIHDALMEYLYAMDPQMMINQIIEGVRASDVNIVTPDLQSVSENTDWPFLMDPMPNAYFTRDPQASIGDGLSINKMTFEARMRESLITEYIMNYNPRFAGKVKVWRDRNHRTHIEGGDELVLNDHVLAIGISQRTTANAIEDIARNLFKDSNYDTIIAISIPHNHAMMHLDTVFTMINYEQFTVHPAILTGDGKVDNWVLHPGKDGEITMEHHTDIKEVLKKALNKSEIDLIPTGNGDPIVAPREQWNDGSNTLSIAPGVVVTYDRNYVSNDLLRQHGILVHEVRSSELSRGRGGPRCMSCPIVREDI.

The Amidino-cysteine intermediate role is filled by cysteine 397.

The protein belongs to the arginine deiminase family.

The protein localises to the cytoplasm. The enzyme catalyses L-arginine + H2O = L-citrulline + NH4(+). The protein operates within amino-acid degradation; L-arginine degradation via ADI pathway; carbamoyl phosphate from L-arginine: step 1/2. The sequence is that of Arginine deiminase from Pediococcus pentosaceus (strain ATCC 25745 / CCUG 21536 / LMG 10740 / 183-1w).